We begin with the raw amino-acid sequence, 434 residues long: Enolase (434 aa).

Glutamine 163 contacts (2R)-2-phosphoglycerate. Glutamate 205 (proton donor) is an active-site residue. Residues aspartate 242, glutamate 291, and aspartate 318 each contribute to the Mg(2+) site. 4 residues coordinate (2R)-2-phosphoglycerate: lysine 343, arginine 372, serine 373, and lysine 394. Residue lysine 343 is the Proton acceptor of the active site.

This sequence belongs to the enolase family. The cofactor is Mg(2+).

The protein localises to the cytoplasm. The protein resides in the secreted. It localises to the cell surface. The enzyme catalyses (2R)-2-phosphoglycerate = phosphoenolpyruvate + H2O. The protein operates within carbohydrate degradation; glycolysis; pyruvate from D-glyceraldehyde 3-phosphate: step 4/5. Catalyzes the reversible conversion of 2-phosphoglycerate (2-PG) into phosphoenolpyruvate (PEP). It is essential for the degradation of carbohydrates via glycolysis. This is Enolase from Streptococcus gordonii (strain Challis / ATCC 35105 / BCRC 15272 / CH1 / DL1 / V288).